A 440-amino-acid polypeptide reads, in one-letter code: Translation initiation factor eIF2B subunit gamma (440 aa).

The protein belongs to the eIF-2B gamma/epsilon subunits family. In terms of assembly, component of the translation initiation factor 2B (eIF2B) complex which is a heterodecamer of two sets of five different subunits: alpha, beta, gamma, delta and epsilon. Subunits alpha, beta and delta comprise a regulatory subcomplex and subunits epsilon and gamma comprise a catalytic subcomplex. Within the complex, the hexameric regulatory complex resides at the center, with the two heterodimeric catalytic subcomplexes bound on opposite sides.

Its subcellular location is the cytoplasm. The protein resides in the cytosol. Functionally, acts as a component of the translation initiation factor 2B (eIF2B) complex, which catalyzes the exchange of GDP for GTP on the eukaryotic initiation factor 2 (eIF2) complex gamma subunit. Its guanine nucleotide exchange factor activity is repressed when bound to eIF2 complex phosphorylated on the alpha subunit, thereby limiting the amount of methionyl-initiator methionine tRNA available to the ribosome and consequently global translation is repressed. The chain is Translation initiation factor eIF2B subunit gamma (eif2b3) from Dictyostelium discoideum (Social amoeba).